The chain runs to 1281 residues: Zinc finger transcription factor Trps1 (1281 aa).

2 disordered regions span residues 1–101 (MVRK…VSFP) and 116–204 (PAAG…KGDL). 2 stretches are compositionally biased toward polar residues: residues 21–31 (LEPTATESKVS) and 40–49 (DQMSENTDQS). Lys29 is covalently cross-linked (Glycyl lysine isopeptide (Lys-Gly) (interchain with G-Cter in SUMO2)). Phosphoserine occurs at positions 90 and 127. Over residues 148-162 (LETKEEHKMSPKATE) the composition is skewed to basic and acidic residues. Residues 166 to 189 (PVQSGQANCQGLSPVSVASKNPQV) show a composition bias toward polar residues. 2 positions are modified to phosphoserine: Ser178 and Ser216. The C2H2-type 1; atypical zinc finger occupies 222–247 (FKCNICGYGYYGNDPTDLIKHFRKYH). Lys263 participates in a covalent cross-link: Glycyl lysine isopeptide (Lys-Gly) (interchain with G-Cter in SUMO2). Residues 333–358 (FRCKFCNFTYMGNSSTELEQHFLQTH) form a C2H2-type 2; atypical zinc finger. The interval 365-393 (SLPSSEGVKPSEKNSNKSIPALRASDSGD) is disordered. Glycyl lysine isopeptide (Lys-Gly) (interchain with G-Cter in SUMO2) cross-links involve residues Lys418, Lys457, Lys474, and Lys488. Positions 484–515 (NDLAKSVEGEPLTKPEKGLSGAKKKDFPSKGA) are disordered. Residues 488–515 (KSVEGEPLTKPEKGLSGAKKKDFPSKGA) are compositionally biased toward basic and acidic residues. A C2H2-type 3; atypical zinc finger spans residues 614–637 (HQCHQCSFSTPDVDVLLFHYETVH). Positions 635-819 (TVHESQASDV…SLGLLTPVSS (185 aa)) are mediates interaction with GLI3. A Glycyl lysine isopeptide (Lys-Gly) (interchain with G-Cter in SUMO2) cross-link involves residue Lys645. C2H2-type zinc fingers lie at residues 666-689 (HSCT…RRAH) and 692-715 (YKCR…NTVH). Glycyl lysine isopeptide (Lys-Gly) (interchain with G-Cter in SUMO2) cross-links involve residues Lys737 and Lys755. A Glycyl lysine isopeptide (Lys-Gly) (interchain with G-Cter in SUMO1); alternate cross-link involves residue Lys766. A Glycyl lysine isopeptide (Lys-Gly) (interchain with G-Cter in SUMO2); alternate cross-link involves residue Lys766. Residues Lys825 and Lys850 each participate in a glycyl lysine isopeptide (Lys-Gly) (interchain with G-Cter in SUMO2) cross-link. The tract at residues 856 to 885 (APAGSEKSASLTQQYPASGESKTKDESQSL) is disordered. Over residues 862 to 871 (KSASLTQQYP) the composition is skewed to polar residues. Residues Lys877 and Lys879 each participate in a glycyl lysine isopeptide (Lys-Gly) (interchain with G-Cter in SUMO2) cross-link. The segment at 896 to 920 (CANCLTTKTSLWRKNANGGYVCNAC) adopts a GATA-type zinc-finger fold. Glycyl lysine isopeptide (Lys-Gly) (interchain with G-Cter in SUMO2) cross-links involve residues Lys925, Lys937, and Lys965. Positions 961–977 (EQLNKQQRGSGEEQVNG) are enriched in polar residues. The interval 961–1000 (EQLNKQQRGSGEEQVNGSPLERRSEDHLSESHPREIPLPS) is disordered. Phosphoserine is present on Ser978. Residues 980 to 995 (LERRSEDHLSESHPRE) show a composition bias toward basic and acidic residues. The tract at residues 985 to 1184 (EDHLSESHPR…PTANGASKEK (200 aa)) is mediates interaction with RNF4. Residues Lys1003, Lys1012, Lys1030, and Lys1040 each participate in a glycyl lysine isopeptide (Lys-Gly) (interchain with G-Cter in SUMO2) cross-link. A compositionally biased stretch (polar residues) spans 1040-1049 (KSPQESTGDP). Residues 1040-1078 (KSPQESTGDPGNSSSVSDGKGSSERGSPIEKYMRPAKHP) are disordered. The residue at position 1041 (Ser1041) is a Phosphoserine. The segment covering 1050–1059 (GNSSSVSDGK) has biased composition (low complexity). A compositionally biased stretch (basic and acidic residues) spans 1060–1072 (GSSERGSPIEKYM). Ser1066 carries the post-translational modification Phosphoserine. Residue Lys1070 forms a Glycyl lysine isopeptide (Lys-Gly) (interchain with G-Cter in SUMO2) linkage. Residue Ser1085 is modified to Phosphoserine. A transcriptional repressor domain region spans residues 1163-1281 (PLDLAIKHSR…QAEKNGKPKE (119 aa)). The tract at residues 1169 to 1195 (KHSRPGPTANGASKEKTKAPPTVKNED) is disordered. Residues Lys1192 and Lys1201 each participate in a glycyl lysine isopeptide (Lys-Gly) (interchain with G-Cter in SUMO2); alternate cross-link. Glycyl lysine isopeptide (Lys-Gly) (interchain with G-Cter in SUMO); alternate cross-links involve residues Lys1192 and Lys1201. A Glycyl lysine isopeptide (Lys-Gly) (interchain with G-Cter in SUMO1); alternate cross-link involves residue Lys1201. C2H2-type zinc fingers lie at residues 1215-1237 (TKCV…MSCH) and 1243-1267 (FQCS…RGLH).

As to quaternary structure, interacts with RNF4; regulates TRPS1 repressor activity. Interacts specifically with the activator form of GLI3 (GLI3A) but not with the repressor form (GLI3R). Sumoylated. Sumoylation in the repressor domain inhibits the transcription repression activity. Sumoylation on Lys-1201 is the major site. Appears to be sumoylated on multiple sites. As to expression, in the embryo, expression is detected in both visceral and skeletal tissues. Found in the maxilla, mandible, snout, prospective phalanges and in the femoral head within the developing hip. Also expressed in the hair follicles.

The protein localises to the nucleus. Functionally, transcriptional repressor. Binds specifically to GATA sequences and represses expression of GATA-regulated genes at selected sites and stages in vertebrate development. Regulates chondrocyte proliferation and differentiation. Executes multiple functions in proliferating chondrocytes, expanding the region of distal chondrocytes, activating proliferation in columnar cells and supporting the differentiation of columnar into hypertrophic chondrocytes. This chain is Zinc finger transcription factor Trps1 (Trps1), found in Mus musculus (Mouse).